Reading from the N-terminus, the 447-residue chain is Eukaryotic translation initiation factor 3 subunit E (447 aa).

Residues 253–421 (LELFFNAGYI…GTVVMNHPPS (169 aa)) enclose the PCI domain.

The protein belongs to the eIF-3 subunit E family. In terms of assembly, component of the eukaryotic translation initiation factor 3 (eIF-3) complex.

It is found in the cytoplasm. In terms of biological role, component of the eukaryotic translation initiation factor 3 (eIF-3) complex, which is involved in protein synthesis of a specialized repertoire of mRNAs and, together with other initiation factors, stimulates binding of mRNA and methionyl-tRNAi to the 40S ribosome. The eIF-3 complex specifically targets and initiates translation of a subset of mRNAs involved in cell proliferation. The sequence is that of Eukaryotic translation initiation factor 3 subunit E from Chaetomium globosum (strain ATCC 6205 / CBS 148.51 / DSM 1962 / NBRC 6347 / NRRL 1970) (Soil fungus).